Consider the following 206-residue polypeptide: Holliday junction branch migration complex subunit RuvA (206 aa).

The tract at residues 1-67 (MIASIFGKIT…QILEEGFAFN (67 aa)) is domain I. Residues 68 to 141 (TLEEKEWFSK…YDRDDGGKRI (74 aa)) are domain II. The tract at residues 141-145 (IKPNT) is flexible linker. Positions 146-206 (AMANDYDEMF…QNNEVTNKTA (61 aa)) are domain III.

Belongs to the RuvA family. As to quaternary structure, homotetramer. Forms an RuvA(8)-RuvB(12)-Holliday junction (HJ) complex. HJ DNA is sandwiched between 2 RuvA tetramers; dsDNA enters through RuvA and exits via RuvB. An RuvB hexamer assembles on each DNA strand where it exits the tetramer. Each RuvB hexamer is contacted by two RuvA subunits (via domain III) on 2 adjacent RuvB subunits; this complex drives branch migration. In the full resolvosome a probable DNA-RuvA(4)-RuvB(12)-RuvC(2) complex forms which resolves the HJ.

The protein localises to the cytoplasm. Functionally, the RuvA-RuvB-RuvC complex processes Holliday junction (HJ) DNA during genetic recombination and DNA repair, while the RuvA-RuvB complex plays an important role in the rescue of blocked DNA replication forks via replication fork reversal (RFR). RuvA specifically binds to HJ cruciform DNA, conferring on it an open structure. The RuvB hexamer acts as an ATP-dependent pump, pulling dsDNA into and through the RuvAB complex. HJ branch migration allows RuvC to scan DNA until it finds its consensus sequence, where it cleaves and resolves the cruciform DNA. This is Holliday junction branch migration complex subunit RuvA from Mycoplasma pneumoniae (strain ATCC 29342 / M129 / Subtype 1) (Mycoplasmoides pneumoniae).